The primary structure comprises 284 residues: Bifunctional protein FolD (284 aa).

NADP(+) is bound by residues 164–166 and Ser-189; that span reads GRS.

It belongs to the tetrahydrofolate dehydrogenase/cyclohydrolase family. Homodimer.

The catalysed reaction is (6R)-5,10-methylene-5,6,7,8-tetrahydrofolate + NADP(+) = (6R)-5,10-methenyltetrahydrofolate + NADPH. It catalyses the reaction (6R)-5,10-methenyltetrahydrofolate + H2O = (6R)-10-formyltetrahydrofolate + H(+). It participates in one-carbon metabolism; tetrahydrofolate interconversion. Functionally, catalyzes the oxidation of 5,10-methylenetetrahydrofolate to 5,10-methenyltetrahydrofolate and then the hydrolysis of 5,10-methenyltetrahydrofolate to 10-formyltetrahydrofolate. This chain is Bifunctional protein FolD, found in Listeria monocytogenes serovar 1/2a (strain ATCC BAA-679 / EGD-e).